Here is a 206-residue protein sequence, read N- to C-terminus: Inosine triphosphate pyrophosphatase (206 aa).

21 to 26 provides a ligand contact to ITP; it reads TGNAKK. Residue glutamate 49 coordinates Mg(2+). ITP-binding positions include lysine 61, 77–78, lysine 94, 153–156, lysine 176, and 181–182; these read DT, FGWD, and HR.

It belongs to the HAM1 NTPase family. As to quaternary structure, homodimer. Requires Mg(2+) as cofactor. Mn(2+) serves as cofactor.

Its subcellular location is the cytoplasm. The enzyme catalyses ITP + H2O = IMP + diphosphate + H(+). It catalyses the reaction dITP + H2O = dIMP + diphosphate + H(+). It carries out the reaction XTP + H2O = XMP + diphosphate + H(+). Functionally, pyrophosphatase that hydrolyzes non-canonical purine nucleotides such as inosine triphosphate (ITP), deoxyinosine triphosphate (dITP) or xanthosine 5'-triphosphate (XTP) to their respective monophosphate derivatives. The enzyme does not distinguish between the deoxy- and ribose forms. Probably excludes non-canonical purines from RNA and DNA precursor pools, thus preventing their incorporation into RNA and DNA and avoiding chromosomal lesions. The sequence is that of Inosine triphosphate pyrophosphatase from Vitis vinifera (Grape).